Here is a 160-residue protein sequence, read N- to C-terminus: Protein-export protein SecB (160 aa).

Belongs to the SecB family. As to quaternary structure, homotetramer, a dimer of dimers. One homotetramer interacts with 1 SecA dimer.

It is found in the cytoplasm. One of the proteins required for the normal export of preproteins out of the cell cytoplasm. It is a molecular chaperone that binds to a subset of precursor proteins, maintaining them in a translocation-competent state. It also specifically binds to its receptor SecA. This Rhizobium etli (strain ATCC 51251 / DSM 11541 / JCM 21823 / NBRC 15573 / CFN 42) protein is Protein-export protein SecB.